We begin with the raw amino-acid sequence, 668 residues long: SHC SH2 domain-binding protein 1 (668 aa).

Ala-2 carries the post-translational modification N-acetylalanine. A phosphoserine mark is found at Ser-31, Ser-44, and Ser-273. 5 PbH1 repeats span residues 428 to 451 (GMDV…LIIH), 452 to 473 (HGKT…TVRT), 474 to 496 (SAEL…EIYP), 497 to 518 (GSKC…LIKD), and 526 to 548 (IPKI…VLVK). Ser-630 carries the post-translational modification Phosphoserine.

Interacts directly with isoform p52shc of SHC1 via its SH2 domain. Interacts with TRIM71; leading to enhanced SHCBP1 protein stability. Interacts with both members of the centralspindlin complex, KIF23 and RACGAP1. As to expression, expressed in spleen, lung and heart with higher expression in testis. No expression in brain, liver and skeletal muscle. Elevated expression in actively cycling cells.

Its subcellular location is the midbody. The protein localises to the cytoplasm. The protein resides in the cytoskeleton. It is found in the spindle. Functionally, may play a role in signaling pathways governing cellular proliferation, cell growth and differentiation. May be a component of a novel signaling pathway downstream of Shc. Acts as a positive regulator of FGF signaling in neural progenitor cells. The sequence is that of SHC SH2 domain-binding protein 1 (Shcbp1) from Mus musculus (Mouse).